Reading from the N-terminus, the 354-residue chain is Ferrochelatase (354 aa).

Fe cation is bound by residues His-204 and Glu-306.

Belongs to the ferrochelatase family.

It is found in the cytoplasm. It carries out the reaction heme b + 2 H(+) = protoporphyrin IX + Fe(2+). It participates in porphyrin-containing compound metabolism; protoheme biosynthesis; protoheme from protoporphyrin-IX: step 1/1. Its function is as follows. Catalyzes the ferrous insertion into protoporphyrin IX. This chain is Ferrochelatase, found in Coxiella burnetii (strain CbuG_Q212) (Coxiella burnetii (strain Q212)).